A 235-amino-acid polypeptide reads, in one-letter code: Keratin-associated protein 4-16 (235 aa).

A 16 X 5 AA repeats of C-C-[GIKRQVHEML]-[SPTRV]-[STVQRCP] region spans residues 1-132 (MCSSKMPCSP…CCCPCCCLRP (132 aa)). A run of 16 repeats spans residues 23–27 (CCHPS), 28–32 (CCQTT), 33–37 (CCRTT), 48–52 (CCRPQ), 53–57 (CCHSV), 58–62 (CCQPT), 63–67 (CCRPS), 68–72 (CCQTT), 78–82 (CCHPS), 83–87 (CCVSS), 88–92 (CCRPQ), 93–97 (CCHSV), 103–107 (CCHPS), 108–112 (CCISS), 118–122 (CCESS), and 128–132 (CCLRP). Pro residues predominate over residues 203-224 (SPSPSLPSLSPPLPSPPLPSPH). Residues 203–235 (SPSPSLPSLSPPLPSPPLPSPHFPSVNPKSMLQ) form a disordered region.

Belongs to the KRTAP type 4 family. Interacts with hair keratins.

Its function is as follows. In the hair cortex, hair keratin intermediate filaments are embedded in an interfilamentous matrix, consisting of hair keratin-associated proteins (KRTAP), which are essential for the formation of a rigid and resistant hair shaft through their extensive disulfide bond cross-linking with abundant cysteine residues of hair keratins. The matrix proteins include the high-sulfur and high-glycine-tyrosine keratins. In Homo sapiens (Human), this protein is Keratin-associated protein 4-16.